The primary structure comprises 1034 residues: Glycine dehydrogenase (decarboxylating) B, mitochondrial (1034 aa).

The transit peptide at 1 to 63 directs the protein to the mitochondrion; sequence MERARRLAIL…LNGFGSQVRT (63 aa). An N6-(pyridoxal phosphate)lysine modification is found at K770.

Belongs to the GcvP family. Homodimer. The glycine cleavage system is composed of four proteins: P, T, L and H. Pyridoxal 5'-phosphate serves as cofactor.

Its subcellular location is the mitochondrion. It carries out the reaction N(6)-[(R)-lipoyl]-L-lysyl-[glycine-cleavage complex H protein] + glycine + H(+) = N(6)-[(R)-S(8)-aminomethyldihydrolipoyl]-L-lysyl-[glycine-cleavage complex H protein] + CO2. Its function is as follows. The glycine cleavage system catalyzes the degradation of glycine. The P protein binds the alpha-amino group of glycine through its pyridoxal phosphate cofactor; CO(2) is released and the remaining methylamine moiety is then transferred to the lipoamide cofactor of the H protein. The chain is Glycine dehydrogenase (decarboxylating) B, mitochondrial (GDCSPB) from Flaveria pringlei.